A 129-amino-acid polypeptide reads, in one-letter code: MSQETTATKQEEQKTSELQQQKKEEQKPQQATTTTKEEKKTKPEKENFEMVINFRRVIMGRKTTRTKRAIKYVRYMVKRHFGAEKVIIDPLLAKAITMNGRDKIVRRVRIAVKRIGEKTYLARLAIKSE.

The tract at residues 1-46 (MSQETTATKQEEQKTSELQQQKKEEQKPQQATTTTKEEKKTKPEKE) is disordered. 2 stretches are compositionally biased toward basic and acidic residues: residues 9–27 (KQEEQKTSELQQQKKEEQK) and 35–46 (TKEEKKTKPEKE).

Belongs to the eukaryotic ribosomal protein eL31 family.

In Sulfolobus acidocaldarius (strain ATCC 33909 / DSM 639 / JCM 8929 / NBRC 15157 / NCIMB 11770), this protein is Large ribosomal subunit protein eL31 (rpl31e).